The primary structure comprises 232 residues: Uracil phosphoribosyltransferase (232 aa).

Residue lysine 38–arginine 42 participates in GTP binding. Residues arginine 87, arginine 112, and aspartate 140–threonine 148 each bind 5-phospho-alpha-D-ribose 1-diphosphate. Uracil-binding positions include isoleucine 204 and glycine 209–alanine 211. Aspartate 210 provides a ligand contact to 5-phospho-alpha-D-ribose 1-diphosphate.

The protein belongs to the UPRTase family. It depends on Mg(2+) as a cofactor.

The catalysed reaction is UMP + diphosphate = 5-phospho-alpha-D-ribose 1-diphosphate + uracil. It participates in pyrimidine metabolism; UMP biosynthesis via salvage pathway; UMP from uracil: step 1/1. With respect to regulation, allosterically activated by GTP. Catalyzes the conversion of uracil and 5-phospho-alpha-D-ribose 1-diphosphate (PRPP) to UMP and diphosphate. The sequence is that of Uracil phosphoribosyltransferase from Methanococcus vannielii (strain ATCC 35089 / DSM 1224 / JCM 13029 / OCM 148 / SB).